Here is a 908-residue protein sequence, read N- to C-terminus: Glutamate receptor ionotropic, kainate 2 (908 aa).

The N-terminal stretch at Met1–Gly31 is a signal peptide. At Thr32–Pro561 the chain is on the extracellular side. Asn67, Asn73, Asn275, Asn378, Asn412, Asn423, and Asn430 each carry an N-linked (GlcNAc...) asparagine glycan. A disulfide bridge connects residues Cys96 and Cys347. Residues Pro516, Ala518, and Arg523 each coordinate L-glutamate. A glycan (N-linked (GlcNAc...) asparagine) is linked at Asn546. A helical membrane pass occupies residues Asp562–Ala582. Residues Arg583–Gly638 are Cytoplasmic-facing. A helical membrane pass occupies residues Ile639–Leu659. The Extracellular segment spans residues Thr660–Asn819. L-glutamate-binding residues include Ala689, Thr690, and Glu738. The cysteines at positions 750 and 804 are disulfide-linked. Asn751 is a glycosylation site (N-linked (GlcNAc...) asparagine). The chain crosses the membrane as a helical span at residues Ile820 to Gly840. Residues Glu841 to Ala908 lie on the Cytoplasmic side of the membrane. A phosphoserine; by PKC mark is found at Ser846 and Ser868. A Glycyl lysine isopeptide (Lys-Gly) (interchain with G-Cter in SUMO1) cross-link involves residue Lys886.

Belongs to the glutamate-gated ion channel (TC 1.A.10.1) family. GRIK2 subfamily. As to quaternary structure, homotetramer and heterotetramer with GRIK5. Tetramers may be formed by the dimerization of dimers. Assembles into a kainate-gated homomeric channel that does not bind AMPA. Can form functional heteromeric receptors with GRIK3. Forms a heteromeric complex with GRIK4 and GRIK5. Interacts with DLG4. Interacts (via C-terminus) with KLHL17 (via kelch repeats); the interaction targets GRIK2 for degradation via ubiquitin-proteasome pathway. Interacts with NETO2. In terms of processing, sumoylation mediates kainate receptor-mediated endocytosis and regulates synaptic transmission. Sumoylation is enhanced by PIAS3 and desumoylated by SENP1. Ubiquitinated. Ubiquitination regulates the GRIK2 levels at the synapse by leading kainate receptor degradation through proteasome. Post-translationally, phosphorylated by PKC at Ser-868 upon agonist activation, this directly enhance sumoylation. Expressed in the hippocampal mossy fiber synapses (at protein level). Most abundant in the cerebellum and the hypothalamus. Expressed in a proportion of dorsal root ganglion (DRG) neurons (13.6%); predominantly small diameter DRG neurons (75%) with the remainder expressed in medium diameter DRG neurons.

Its subcellular location is the cell membrane. It localises to the postsynaptic cell membrane. The enzyme catalyses Ca(2+)(in) = Ca(2+)(out). It catalyses the reaction Na(+)(in) = Na(+)(out). Its activity is regulated as follows. Cold receptor activity activated by temperatures between 10-19 degrees Celsius. Ionotropic glutamate receptor that functions as a cation-permeable ligand-gated ion channel, gated by L-glutamate and the glutamatergic agonist kainic acid. L-glutamate acts as an excitatory neurotransmitter at many synapses in the central nervous system. Binding of the excitatory neurotransmitter L-glutamate induces a conformation change, leading to the opening of the cation channel, and thereby converts the chemical signal to an electrical impulse. The receptor then desensitizes rapidly and enters a transient inactive state, characterized by the presence of bound agonist. Modulates cell surface expression of NETO2. In association with GRIK3, involved in presynaptic facilitation of glutamate release at hippocampal mossy fiber synapses. Functionally, independent of its ionotropic glutamate receptor activity, acts as a thermoreceptor conferring sensitivity to cold temperatures. Functions in dorsal root ganglion neurons. Its function is as follows. Ionotropic glutamate receptor that functions as a cation-permeable ligand-gated ion channel, gated by L-glutamate and the glutamatergic agonist kainic acid. The protein is Glutamate receptor ionotropic, kainate 2 (Grik2) of Mus musculus (Mouse).